Consider the following 215-residue polypeptide: Pyrrolidone-carboxylate peptidase (215 aa).

Active-site residues include Glu-80, Cys-143, and His-167.

It belongs to the peptidase C15 family. In terms of assembly, homotetramer.

It localises to the cytoplasm. The catalysed reaction is Release of an N-terminal pyroglutamyl group from a polypeptide, the second amino acid generally not being Pro.. In terms of biological role, removes 5-oxoproline from various penultimate amino acid residues except L-proline. The chain is Pyrrolidone-carboxylate peptidase from Brevibacillus brevis (strain 47 / JCM 6285 / NBRC 100599).